The chain runs to 288 residues: Coenzyme gamma-F420-2:alpha-L-glutamate ligase (288 aa).

The region spanning 101 to 287 (IKLLAKNKIK…IAEALVRYAK (187 aa)) is the ATP-grasp domain. ATP is bound by residues K139, 173-186 (QEFI…LYRD), and R202. D245, E257, and N259 together coordinate Mn(2+).

The protein belongs to the RimK family. CofF subfamily. In terms of assembly, monomer. The cofactor is Mn(2+).

The catalysed reaction is oxidized coenzyme F420-2 + L-glutamate + ATP = oxidized coenzyme alpha-F420-3 + ADP + phosphate + H(+). Its pathway is cofactor biosynthesis; coenzyme F420 biosynthesis. Its activity is regulated as follows. Inhibited by KCl. Its function is as follows. Catalyzes the ATP-dependent addition of one alpha-linked L-glutamate molecule to coenzyme gamma-F420-2, producing alpha-F420-3, the major form of coenzyme F420 found in M.jannaschii. Thus, caps the gamma-polyglutamate tail of coenzyme F420 with a terminal alpha-linked glutamate. Prefers ATP to other purine nucleotide triphosphates; GTP gives about 25% of the activity observed with ATP. Cannot catalyze the addition of the following amino acids or analogs: D-glutamate, beta-glutamate, L-aspartate, L-glutamine, L-alpha-aminoadipate, or D,L-2-amino-4-phosphono-butyrate. This is Coenzyme gamma-F420-2:alpha-L-glutamate ligase (cofF) from Methanocaldococcus jannaschii (strain ATCC 43067 / DSM 2661 / JAL-1 / JCM 10045 / NBRC 100440) (Methanococcus jannaschii).